The chain runs to 141 residues: Hemoglobin subunit alpha (141 aa).

The Globin domain maps to 1–141; that stretch reads VLSSADKANI…VSTVLTSKYR (141 aa). Position 3 is a phosphoserine (S3). Residues K7 and K11 each carry the N6-succinyllysine modification. K16 bears the N6-acetyllysine; alternate mark. At K16 the chain carries N6-succinyllysine; alternate. Y24 is modified (phosphotyrosine). An N6-succinyllysine modification is found at K40. Residue S49 is modified to Phosphoserine. H58 is a binding site for O2. H87 lines the heme b pocket. A Phosphoserine modification is found at S102. T108 bears the Phosphothreonine mark. S124 and S131 each carry phosphoserine. Residues T134 and T137 each carry the phosphothreonine modification. Position 138 is a phosphoserine (S138).

The protein belongs to the globin family. Heterotetramer of two alpha chains and two beta chains. Red blood cells.

Functionally, involved in oxygen transport from the lung to the various peripheral tissues. Hemopressin acts as an antagonist peptide of the cannabinoid receptor CNR1. Hemopressin-binding efficiently blocks cannabinoid receptor CNR1 and subsequent signaling. This chain is Hemoglobin subunit alpha (HBA), found in Proteles cristata (Aardwolf).